Consider the following 473-residue polypeptide: UDP-N-acetylmuramate--L-alanine ligase (473 aa).

123 to 129 serves as a coordination point for ATP; that stretch reads GSHGKTS.

The protein belongs to the MurCDEF family.

The protein resides in the cytoplasm. It carries out the reaction UDP-N-acetyl-alpha-D-muramate + L-alanine + ATP = UDP-N-acetyl-alpha-D-muramoyl-L-alanine + ADP + phosphate + H(+). It participates in cell wall biogenesis; peptidoglycan biosynthesis. In terms of biological role, cell wall formation. The chain is UDP-N-acetylmuramate--L-alanine ligase from Prochlorococcus marinus subsp. pastoris (strain CCMP1986 / NIES-2087 / MED4).